Reading from the N-terminus, the 193-residue chain is MQNIKCVVVGDGAVGKTCMLISYTTNGFPSEYLPTVFDNYCANLMLDGKPYSLGLWDTAGQEEYDRLRPLSYPQTDVFLICFSIISQSSFENVSTKWFKEVNHHAPGVPIVLVGTKQDIRNDNDSIKKLKERNIELVPYEKGLEKAKEINAIYLEASALTQRGVKNVFDQCIRSVIYPNKLNKKPKKKTCTIM.

Position 10–17 (10–17) interacts with GTP; it reads GDGAVGKT. Residues 32–40 carry the Effector region motif; the sequence is YLPTVFDNY. Residues 57-61 and 115-118 each bind GTP; these read DTAGQ and TKQD. Position 190 is a cysteine methyl ester (Cys-190). Cys-190 carries the S-geranylgeranyl cysteine lipid modification. Residues 191-193 constitute a propeptide, removed in mature form; the sequence is TIM.

This sequence belongs to the small GTPase superfamily. Rho family.

Its subcellular location is the cell membrane. The chain is Rho-related protein racF2 (racF2) from Dictyostelium discoideum (Social amoeba).